The chain runs to 118 residues: UPF0342 protein BC_0880 (118 aa).

The protein belongs to the UPF0342 family.

The chain is UPF0342 protein BC_0880 from Bacillus cereus (strain ATCC 14579 / DSM 31 / CCUG 7414 / JCM 2152 / NBRC 15305 / NCIMB 9373 / NCTC 2599 / NRRL B-3711).